A 380-amino-acid chain; its full sequence is Epoxyqueuosine reductase (380 aa).

Aspartate 134 acts as the Proton donor in catalysis. The 4Fe-4S ferredoxin-type 1 domain maps to 179–208 (PPDQPIEDQCGSCTKCIDICPTGALIQGGQ). Residues cysteine 188, cysteine 191, cysteine 194, cysteine 198, cysteine 214, cysteine 240, cysteine 243, and cysteine 247 each contribute to the [4Fe-4S] cluster site. The 4Fe-4S ferredoxin-type 2 domain maps to 226 to 258 (PEEYRDKIGNRIYGCDTCQTVCPKNKGMDFHNH).

It belongs to the QueG family. In terms of assembly, monomer. Cob(II)alamin serves as cofactor. It depends on [4Fe-4S] cluster as a cofactor.

It is found in the cytoplasm. It catalyses the reaction epoxyqueuosine(34) in tRNA + AH2 = queuosine(34) in tRNA + A + H2O. It participates in tRNA modification; tRNA-queuosine biosynthesis. Its function is as follows. Catalyzes the conversion of epoxyqueuosine (oQ) to queuosine (Q), which is a hypermodified base found in the wobble positions of tRNA(Asp), tRNA(Asn), tRNA(His) and tRNA(Tyr). The chain is Epoxyqueuosine reductase from Bacillus anthracis.